A 486-amino-acid polypeptide reads, in one-letter code: Ammonium transporter 2 member 1 (486 aa).

11 helical membrane-spanning segments follow: residues 29–49 (ASTLVGIQSMPGLVVLYGSIV), 57–77 (SAFMALYAYASSLLVWVLVGF), 127–147 (LVLFQFEFAAITLVLLAGSVL), 161–181 (LWLLLSYTVGAFSLWGGGFLY), 190–210 (GGYVIHLSSGIAGFTAAYWVG), 225–245 (ILLMIAGGGLLWMGWAGFNGG), 252–272 (IAASVAVLNTNVCAATSLLMW), 285–305 (VIGAVQGMMTGLVCITPGAGL), 309–329 (WAAVVMGIFAGSVPWFTMMIL), 343–363 (LAVFHTHAVAGLLGGILTGLL), and 399–419 (FVIAWNLVVTTAILLGIGLFI). Residues 454 to 470 (RHDLSRGGGGGDRDGPA) show a composition bias toward basic and acidic residues. The interval 454-473 (RHDLSRGGGGGDRDGPAGER) is disordered.

This sequence belongs to the ammonia transporter channel (TC 1.A.11.2) family. Expressed in roots and leaf blades and sheaths.

It localises to the cell membrane. In terms of biological role, involved in ammonium transport. This Oryza sativa subsp. japonica (Rice) protein is Ammonium transporter 2 member 1 (AMT2-1).